Consider the following 374-residue polypeptide: Pectate lyase 3 (374 aa).

The signal sequence occupies residues 1–22; it reads MKYLLPSTAAGLLLLAAQPTMA. The cysteines at positions 93 and 176 are disulfide-linked. Residues Asp-150, Asp-152, Glu-187, and Asp-191 each coordinate Ca(2+). Arg-239 is an active-site residue. A disulfide bridge connects residues Cys-350 and Cys-373.

Belongs to the polysaccharide lyase 1 family. PLADES subfamily. Ca(2+) is required as a cofactor.

Its subcellular location is the secreted. The catalysed reaction is Eliminative cleavage of (1-&gt;4)-alpha-D-galacturonan to give oligosaccharides with 4-deoxy-alpha-D-galact-4-enuronosyl groups at their non-reducing ends.. It participates in glycan metabolism; pectin degradation; 2-dehydro-3-deoxy-D-gluconate from pectin: step 2/5. In terms of biological role, involved in maceration and soft-rotting of plant tissue. The sequence is that of Pectate lyase 3 (pel3) from Pectobacterium atrosepticum (strain SCRI 1043 / ATCC BAA-672) (Erwinia carotovora subsp. atroseptica).